The primary structure comprises 84 residues: Antitoxin VapB30 (84 aa).

Its function is as follows. Antitoxin component of a type II toxin-antitoxin (TA) system. Upon expression in M.smegmatis neutralizes the effect of cognate toxin VapC30. The chain is Antitoxin VapB30 (vapB30) from Mycobacterium tuberculosis (strain ATCC 25618 / H37Rv).